A 296-amino-acid polypeptide reads, in one-letter code: dTDP-4-dehydrorhamnose reductase (296 aa).

Residues 10-12 (GQI), 35-36 (DL), and 59-61 (AYT) each bind NADH. Residues 11-12 (QI), 35-36 (DL), and 59-61 (AYT) each bind NADPH. A dTDP-beta-L-rhamnose-binding site is contributed by 100 to 101 (TD). NADH-binding residues include Tyr124 and Lys128. NADPH is bound by residues Tyr124 and Lys128. The active-site Proton donor/acceptor is Tyr124. Trp149 provides a ligand contact to dTDP-beta-L-rhamnose.

Belongs to the dTDP-4-dehydrorhamnose reductase family. As to quaternary structure, homodimer. It depends on Mg(2+) as a cofactor.

It catalyses the reaction dTDP-beta-L-rhamnose + NADP(+) = dTDP-4-dehydro-beta-L-rhamnose + NADPH + H(+). It functions in the pathway carbohydrate biosynthesis; dTDP-L-rhamnose biosynthesis. In terms of biological role, involved in the biosynthesis of the dTDP-L-rhamnose which is an important component of lipopolysaccharide (LPS). Catalyzes the reduction of dTDP-6-deoxy-L-lyxo-4-hexulose to yield dTDP-L-rhamnose. RmlD uses NADH and NADPH nearly equally well. This Sinorhizobium fredii (strain NBRC 101917 / NGR234) protein is dTDP-4-dehydrorhamnose reductase.